A 320-amino-acid chain; its full sequence is Lipoyl synthase (320 aa).

Residues C66, C71, C77, C92, C96, C99, and S306 each coordinate [4Fe-4S] cluster. The 219-residue stretch at 77–295 folds into the Radical SAM core domain; it reads CFGHGTATFM…AEIGYAMGFS (219 aa).

Belongs to the radical SAM superfamily. Lipoyl synthase family. [4Fe-4S] cluster is required as a cofactor.

The protein resides in the cytoplasm. It carries out the reaction [[Fe-S] cluster scaffold protein carrying a second [4Fe-4S](2+) cluster] + N(6)-octanoyl-L-lysyl-[protein] + 2 oxidized [2Fe-2S]-[ferredoxin] + 2 S-adenosyl-L-methionine + 4 H(+) = [[Fe-S] cluster scaffold protein] + N(6)-[(R)-dihydrolipoyl]-L-lysyl-[protein] + 4 Fe(3+) + 2 hydrogen sulfide + 2 5'-deoxyadenosine + 2 L-methionine + 2 reduced [2Fe-2S]-[ferredoxin]. It participates in protein modification; protein lipoylation via endogenous pathway; protein N(6)-(lipoyl)lysine from octanoyl-[acyl-carrier-protein]: step 2/2. Its function is as follows. Catalyzes the radical-mediated insertion of two sulfur atoms into the C-6 and C-8 positions of the octanoyl moiety bound to the lipoyl domains of lipoate-dependent enzymes, thereby converting the octanoylated domains into lipoylated derivatives. This is Lipoyl synthase from Thioalkalivibrio sulfidiphilus (strain HL-EbGR7).